Here is a 239-residue protein sequence, read N- to C-terminus: MAVVTLAEMMEAGAHFGHQTRRWNPKMSRYIYCARNGVHIIDLVQTAICMNNAYKWTRSAARSGKRFLFVGTKKQASEVIAQEAARCGAAYVNQRWLGGMLTNWTTMRARIDRLKDLERMEGSGSIAMRPKKEAAVLRRELDRLRKYLGGLKNMRRLPDVVILVDQRRETNAVLECRKLDIPLVSMLDTNCDPDLCDVPIPCNDDAVRSVQLVLSRLSDAINEGRHGVQDQRGNDDSEG.

Belongs to the universal ribosomal protein uS2 family.

It localises to the plastid. It is found in the organellar chromatophore. This is Small ribosomal subunit protein uS2c (rps2) from Paulinella chromatophora.